A 258-amino-acid chain; its full sequence is Tritrans,polycis-undecaprenyl-diphosphate synthase (geranylgeranyl-diphosphate specific) (258 aa).

D37 is a catalytic residue. Residue D37 participates in Mg(2+) binding. Substrate-binding positions include 38 to 41, H54, and 82 to 84; these read GNRR and STE. N85 acts as the Proton acceptor in catalysis. Residues F86, R88, R207, and 213–215 contribute to the substrate site; that span reads RIS. Residue E226 participates in Mg(2+) binding.

It belongs to the UPP synthase family. As to quaternary structure, homodimer. It depends on Mg(2+) as a cofactor.

It carries out the reaction geranylgeranyl diphosphate + 7 isopentenyl diphosphate = tri-trans,hepta-cis-undecaprenyl diphosphate + 7 diphosphate. Functionally, catalyzes the sequential condensation of isopentenyl diphosphate (IPP) with geranylgeranyl diphosphate (GGPP) to yield (2Z,6Z,10Z,14Z,18Z,22Z,26Z,30E,34E,38E)-undecaprenyl diphosphate (tritrans,heptacis-UPP). It is probably the precursor of glycosyl carrier lipids. This chain is Tritrans,polycis-undecaprenyl-diphosphate synthase (geranylgeranyl-diphosphate specific), found in Thermoplasma volcanium (strain ATCC 51530 / DSM 4299 / JCM 9571 / NBRC 15438 / GSS1).